Here is a 448-residue protein sequence, read N- to C-terminus: Proton extrusion protein PxcA (448 aa).

The next 4 membrane-spanning stretches (helical) occupy residues 231–251 (ILLL…FFLI), 323–343 (IDSI…VLVL), 372–392 (LIIL…WEVI), and 408–428 (FNFL…KYWI).

Belongs to the CemA family.

The protein resides in the cell inner membrane. Functionally, required for H(+) efflux immediately after light irradiation to form a rapid H(+) concentration gradient across the thylakoid membranes. Together with PxcL, contributes to transient H(+) uptake following dark to light transition. This is Proton extrusion protein PxcA from Rippkaea orientalis (strain PCC 8801 / RF-1) (Cyanothece sp. (strain PCC 8801)).